The sequence spans 342 residues: GTPase Obg (342 aa).

One can recognise an Obg domain in the interval 1–159; sequence MKFLDEAKVY…HWLWLRLKLI (159 aa). One can recognise an OBG-type G domain in the interval 160-327; the sequence is ADAGLVGLPN…ALRALMAAMD (168 aa). GTP contacts are provided by residues 166–173, 191–195, 212–215, 279–282, and 308–310; these read GLPNAGKS, FTTLH, DIPG, SKAD, and SAA. Mg(2+) is bound by residues S173 and T193.

Belongs to the TRAFAC class OBG-HflX-like GTPase superfamily. OBG GTPase family. Monomer. Mg(2+) is required as a cofactor.

The protein resides in the cytoplasm. An essential GTPase which binds GTP, GDP and possibly (p)ppGpp with moderate affinity, with high nucleotide exchange rates and a fairly low GTP hydrolysis rate. Plays a role in control of the cell cycle, stress response, ribosome biogenesis and in those bacteria that undergo differentiation, in morphogenesis control. This Methylobacterium nodulans (strain LMG 21967 / CNCM I-2342 / ORS 2060) protein is GTPase Obg.